The following is a 130-amino-acid chain: Small ribosomal subunit protein uS9 (130 aa).

Belongs to the universal ribosomal protein uS9 family.

This Polaromonas naphthalenivorans (strain CJ2) protein is Small ribosomal subunit protein uS9.